We begin with the raw amino-acid sequence, 249 residues long: Ribonuclease HII (249 aa).

The 192-residue stretch at 30–221 (GPVAGVDEVG…VRRLVMDGEP (192 aa)) folds into the RNase H type-2 domain. A divalent metal cation is bound by residues Asp36, Glu37, and Asp130.

Belongs to the RNase HII family. Mn(2+) serves as cofactor. Mg(2+) is required as a cofactor.

The protein resides in the cytoplasm. It carries out the reaction Endonucleolytic cleavage to 5'-phosphomonoester.. Endonuclease that specifically degrades the RNA of RNA-DNA hybrids. The chain is Ribonuclease HII from Mycolicibacterium vanbaalenii (strain DSM 7251 / JCM 13017 / BCRC 16820 / KCTC 9966 / NRRL B-24157 / PYR-1) (Mycobacterium vanbaalenii).